Reading from the N-terminus, the 477-residue chain is Stromelysin-1 (477 aa).

An N-terminal signal peptide occupies residues 1 to 17 (MKNLPILLLLCVAACSA). Positions 18–99 (YPLDRSARDE…SRCGVPDVGH (82 aa)) are cleaved as a propeptide — activation peptide. Positions 90 to 97 (SRCGVPDV) match the Cysteine switch motif. Residue Cys-92 participates in Zn(2+) binding. N-linked (GlcNAc...) asparagine glycosylation occurs at Asn-120. Residues Asp-124 and Asp-158 each contribute to the Ca(2+) site. Zn(2+)-binding residues include His-168 and Asp-170. 4 residues coordinate Ca(2+): Asp-175, Gly-176, Gly-178, and Val-180. Zn(2+) is bound at residue His-183. Ca(2+)-binding residues include Gly-190, Asn-192, and Asp-194. His-196 provides a ligand contact to Zn(2+). Ca(2+) contacts are provided by Asp-198, Asp-199, and Glu-201. Position 218 (His-218) interacts with Zn(2+). The active site involves Glu-219. The Zn(2+) site is built by His-222 and His-228. The disordered stretch occupies residues 260–285 (QSLYGPPPASPDSPVEPSEPEPPAPG). 4 Hemopexin repeats span residues 287–336 (LAMC…WPSL), 337–383 (PSGI…GFPP), 385–433 (VRKI…FPGI), and 434–477 (DSKL…WFNC). The cysteines at positions 290 and 477 are disulfide-linked. Asp-297 provides a ligand contact to Ca(2+). Asp-389 and Asp-438 together coordinate Ca(2+).

This sequence belongs to the peptidase M10A family. Ca(2+) serves as cofactor. Requires Zn(2+) as cofactor.

Its subcellular location is the secreted. The protein localises to the extracellular space. It localises to the extracellular matrix. The catalysed reaction is Preferential cleavage where P1', P2' and P3' are hydrophobic residues.. Metalloproteinase with a rather broad substrate specificity that can degrade fibronectin, laminin, gelatins of type I, III, IV, and V; collagens III, IV, X, and IX, and cartilage proteoglycans. Activates different molecules including growth factors, plasminogen or other matrix metalloproteinases such as MMP9. Once released into the extracellular matrix (ECM), the inactive pro-enzyme is activated by the plasmin cascade signaling pathway. Also acts intracellularly. For example, in dopaminergic neurons, gets activated by the serine protease HTRA2 upon stress and plays a pivotal role in DA neuronal degeneration by mediating microglial activation and alpha-synuclein/SNCA cleavage. In addition, plays a role in immune response and possesses antiviral activity against various viruses. Mechanistically, translocates from the cytoplasm into the cell nucleus upon virus infection to influence NF-kappa-B activities. This Equus caballus (Horse) protein is Stromelysin-1 (MMP3).